Reading from the N-terminus, the 366-residue chain is BIIDXI-like protein At5g11420 (366 aa).

Residues 1-22 (MKGGSLSFLFVLLIATITSVIC) form the signal peptide. Residues Asn-98, Asn-122, and Asn-209 are each glycosylated (N-linked (GlcNAc...) asparagine).

In terms of assembly, interacts with PME3.

It localises to the secreted. The protein localises to the cell wall. Its function is as follows. Together with BIIDXI, acts as a positive regulator of PME3 activity during several developmental processes, including seed germination and endosperm (testa) rupture at the micropyle, probably by modulating the pectin status in cell walls. This Arabidopsis thaliana (Mouse-ear cress) protein is BIIDXI-like protein At5g11420.